The chain runs to 401 residues: Argininosuccinate synthase (401 aa).

ATP is bound by residues 10 to 18 (AYSGGVDTS) and alanine 38. Tyrosine 89 serves as a coordination point for L-citrulline. Glycine 119 is an ATP binding site. L-aspartate contacts are provided by threonine 121, asparagine 125, and aspartate 126. Asparagine 125 provides a ligand contact to L-citrulline. Residues arginine 129, serine 177, serine 186, glutamate 262, and tyrosine 274 each coordinate L-citrulline.

The protein belongs to the argininosuccinate synthase family. Type 1 subfamily. As to quaternary structure, homotetramer.

The protein resides in the cytoplasm. The enzyme catalyses L-citrulline + L-aspartate + ATP = 2-(N(omega)-L-arginino)succinate + AMP + diphosphate + H(+). The protein operates within amino-acid biosynthesis; L-arginine biosynthesis; L-arginine from L-ornithine and carbamoyl phosphate: step 2/3. The sequence is that of Argininosuccinate synthase from Microcystis aeruginosa (strain NIES-843 / IAM M-2473).